Consider the following 341-residue polypeptide: uncharacterized protein (341 aa).

58-82 (ITGGSSGIGAAAAKKIAEAGGTVVL) provides a ligand contact to NADP(+). Ser194 is a binding site for substrate. Tyr207 functions as the Proton acceptor in the catalytic mechanism. Residues 309 to 329 (DSSAAKGSESQTDTSELDKRS) are disordered.

This sequence belongs to the short-chain dehydrogenases/reductases (SDR) family.

This is an uncharacterized protein from Mycobacterium bovis (strain ATCC BAA-935 / AF2122/97).